Reading from the N-terminus, the 465-residue chain is Hydroxyacid-oxoacid transhydrogenase, mitochondrial (465 aa).

This sequence belongs to the iron-containing alcohol dehydrogenase family. Hydroxyacid-oxoacid transhydrogenase subfamily.

The protein resides in the mitochondrion. The catalysed reaction is (S)-3-hydroxybutanoate + 2-oxoglutarate = (R)-2-hydroxyglutarate + acetoacetate. It catalyses the reaction 4-hydroxybutanoate + 2-oxoglutarate = (R)-2-hydroxyglutarate + succinate semialdehyde. In terms of biological role, catalyzes the cofactor-independent reversible oxidation of gamma-hydroxybutyrate (GHB) to succinic semialdehyde (SSA) coupled to reduction of 2-ketoglutarate (2-KG) to D-2-hydroxyglutarate (D-2-HG). L-3-hydroxybutyrate (L-3-OHB) is also a substrate for HOT when using 2-KG as hydrogen acceptor, resulting in the formation of D-2-HG. This chain is Hydroxyacid-oxoacid transhydrogenase, mitochondrial, found in Caenorhabditis briggsae.